Here is a 62-residue protein sequence, read N- to C-terminus: MNMAKMIKVKQTKSAIGRLPKHKATLTGLGLRRIGHVRELEDTPSVRGMINRVFYMVEVVEE.

Belongs to the universal ribosomal protein uL30 family. Part of the 50S ribosomal subunit.

The polypeptide is Large ribosomal subunit protein uL30 (Pseudoalteromonas atlantica (strain T6c / ATCC BAA-1087)).